The primary structure comprises 992 residues: Disks large-associated protein 4 (992 aa).

Over residues 1–20 (MKGLGDSRPRHLSDSLDPPH) the composition is skewed to basic and acidic residues. Disordered stretches follow at residues 1–31 (MKGLGDSRPRHLSDSLDPPHEPLFAGPDRNP) and 157–225 (MEGT…PASG). Over residues 162–171 (GKVGGNGSKK) the composition is skewed to gly residues. Residues 172-194 (GGLEDGKGRRAKSKERAKAGEPK) are compositionally biased toward basic and acidic residues. Polar residues predominate over residues 199-208 (SNISGWWSSD). Residues Ser-206 and Ser-207 each carry the phosphoserine modification. Arg-290 bears the Omega-N-methylarginine mark. The tract at residues 342–396 (TTLLSPRDMDSTAEGPIPCRRMRSGSYIKAMGDEDSDESGGGSPKPSPKTAARRQ) is disordered. A phosphoserine mark is found at Ser-377, Ser-380, Ser-384, Ser-388, Ser-405, Ser-415, and Ser-421. 3 disordered regions span residues 527-751 (SVSL…GPRQ), 763-798 (SYGDNSDPALEASSLPPPDPWLETSSSSPAEPAQPG), and 915-992 (TPEK…QTRL). Positions 528 to 554 (VSLQSLSPPPSTGSLSNSRTLPSSSCL) are enriched in low complexity. The span at 576-591 (VTVQSSTESAQDTYLD) shows a compositional bias: polar residues. Residues Ser-580, Ser-581, Ser-609, Ser-611, Ser-665, and Ser-744 each carry the phosphoserine modification. Positions 600-620 (TSQSGLSNSSDSLDSSTRPPS) are enriched in low complexity. Thr-915 carries the phosphothreonine modification. Basic and acidic residues-rich tracts occupy residues 915-925 (TPEKRKEEKKP) and 940-958 (VSRDKASDAGDKQRQEARK). The span at 969–978 (VRQNSATESA) shows a compositional bias: polar residues. Ser-973 bears the Phosphoserine mark.

Belongs to the SAPAP family. In terms of assembly, interacts with DLG1 and DLG4/PSD-95.

Its subcellular location is the membrane. Functionally, may play a role in the molecular organization of synapses and neuronal cell signaling. Could be an adapter protein linking ion channel to the subsynaptic cytoskeleton. May induce enrichment of PSD-95/SAP90 at the plasma membrane. The sequence is that of Disks large-associated protein 4 (Dlgap4) from Mus musculus (Mouse).